A 523-amino-acid chain; its full sequence is GMP synthase [glutamine-hydrolyzing] (523 aa).

One can recognise a Glutamine amidotransferase type-1 domain in the interval 8–205 (KILILDFGSQ…VVDICGCETN (198 aa)). The Nucleophile role is filled by Cys85. Active-site residues include His179 and Glu181. A GMPS ATP-PPase domain is found at 206–398 (WTAENIIEDA…LGLPAEMLNR (193 aa)). ATP is bound at residue 233–239 (SGGVDSS).

As to quaternary structure, homodimer.

The enzyme catalyses XMP + L-glutamine + ATP + H2O = GMP + L-glutamate + AMP + diphosphate + 2 H(+). It participates in purine metabolism; GMP biosynthesis; GMP from XMP (L-Gln route): step 1/1. Its function is as follows. Catalyzes the synthesis of GMP from XMP. This chain is GMP synthase [glutamine-hydrolyzing], found in Histophilus somni (strain 2336) (Haemophilus somnus).